Here is a 349-residue protein sequence, read N- to C-terminus: Probable ethanolamine kinase (349 aa).

The protein belongs to the choline/ethanolamine kinase family.

It is found in the cytoplasm. It carries out the reaction ethanolamine + ATP = phosphoethanolamine + ADP + H(+). Its pathway is phospholipid metabolism; phosphatidylethanolamine biosynthesis; phosphatidylethanolamine from ethanolamine: step 1/3. Highly specific for ethanolamine phosphorylation. May be a rate-controlling step in phosphatidylethanolamine biosynthesis. The sequence is that of Probable ethanolamine kinase (etnk) from Nematostella vectensis (Starlet sea anemone).